The primary structure comprises 226 residues: MLTWLSRTDFDFPPLDKALQEPNGLLAAGGDLNPQRLVAAYRHGCFPWYQDGQPILWWSPDPRTVLFPDELHVSRSLAKCLRQQRFEVTFNHDFRAVIQACAAPRDYADGTWITTPMQLAYQELHLRGIAHSVEVWQERQLVGGLYGLAMGRLFFGESMFSRADNASKVGFVTLVRHLRDAGFVLIDCQMPTRHLHSLGARAISRGEFADYLQRYRDQPPTGDLDF.

The protein belongs to the L/F-transferase family.

It localises to the cytoplasm. It carries out the reaction N-terminal L-lysyl-[protein] + L-leucyl-tRNA(Leu) = N-terminal L-leucyl-L-lysyl-[protein] + tRNA(Leu) + H(+). The enzyme catalyses N-terminal L-arginyl-[protein] + L-leucyl-tRNA(Leu) = N-terminal L-leucyl-L-arginyl-[protein] + tRNA(Leu) + H(+). The catalysed reaction is L-phenylalanyl-tRNA(Phe) + an N-terminal L-alpha-aminoacyl-[protein] = an N-terminal L-phenylalanyl-L-alpha-aminoacyl-[protein] + tRNA(Phe). Functionally, functions in the N-end rule pathway of protein degradation where it conjugates Leu, Phe and, less efficiently, Met from aminoacyl-tRNAs to the N-termini of proteins containing an N-terminal arginine or lysine. The chain is Leucyl/phenylalanyl-tRNA--protein transferase from Pseudomonas aeruginosa (strain UCBPP-PA14).